We begin with the raw amino-acid sequence, 126 residues long: Aspartate 1-decarboxylase (126 aa).

Ser-25 functions as the Schiff-base intermediate with substrate; via pyruvic acid in the catalytic mechanism. Ser-25 carries the post-translational modification Pyruvic acid (Ser). Thr-57 is a binding site for substrate. The Proton donor role is filled by Tyr-58. 72–74 lines the substrate pocket; that stretch reads GAA.

Belongs to the PanD family. Heterooctamer of four alpha and four beta subunits. Pyruvate serves as cofactor. In terms of processing, is synthesized initially as an inactive proenzyme, which is activated by self-cleavage at a specific serine bond to produce a beta-subunit with a hydroxyl group at its C-terminus and an alpha-subunit with a pyruvoyl group at its N-terminus.

It is found in the cytoplasm. It carries out the reaction L-aspartate + H(+) = beta-alanine + CO2. Its pathway is cofactor biosynthesis; (R)-pantothenate biosynthesis; beta-alanine from L-aspartate: step 1/1. Functionally, catalyzes the pyruvoyl-dependent decarboxylation of aspartate to produce beta-alanine. This Campylobacter jejuni subsp. jejuni serotype O:6 (strain 81116 / NCTC 11828) protein is Aspartate 1-decarboxylase.